The primary structure comprises 373 residues: PqqA peptide cyclase (373 aa).

In terms of domain architecture, Radical SAM core spans 7–227 (ILNPVGLLAE…EVYAGVIVID (221 aa)). Residues Cys-21, Cys-25, and Cys-28 each contribute to the [4Fe-4S] cluster site.

It belongs to the radical SAM superfamily. PqqE family. As to quaternary structure, interacts with PqqD. The interaction is necessary for activity of PqqE. [4Fe-4S] cluster serves as cofactor.

It carries out the reaction [PQQ precursor protein] + S-adenosyl-L-methionine = E-Y cross-linked-[PQQ precursor protein] + 5'-deoxyadenosine + L-methionine + H(+). Its pathway is cofactor biosynthesis; pyrroloquinoline quinone biosynthesis. Its function is as follows. Catalyzes the cross-linking of a glutamate residue and a tyrosine residue in the PqqA protein as part of the biosynthesis of pyrroloquinoline quinone (PQQ). The protein is PqqA peptide cyclase of Methylocella silvestris (strain DSM 15510 / CIP 108128 / LMG 27833 / NCIMB 13906 / BL2).